The chain runs to 447 residues: UDP-glycosyltransferase 76B1 (447 aa).

UDP-alpha-D-glucose-binding positions include Ser269, 327–328 (WA), 345–353 (HCGWNSTLE), and 367–370 (FGDQ).

The protein belongs to the UDP-glycosyltransferase family. As to expression, expressed in roots, leaves, hydathodes, sepals and style.

Functionally, glycosylates the amino acid-related molecules isoleucic acid (2-hydroxy-3-methylpentanoic acid) and valic acid (2-hydroxy-3-methylbutyric acid). Acts as a negative regulator of salicylic acid (SA)-dependent plant defense in the absence of pathogens and promotes the jasmonate (JA) response. Negatively influences the onset of senescence. This chain is UDP-glycosyltransferase 76B1, found in Arabidopsis thaliana (Mouse-ear cress).